A 246-amino-acid polypeptide reads, in one-letter code: NLP effector protein 2 (246 aa).

A signal peptide spans 1-19; that stretch reads MKFVVFLCAIAAVVATIQG. The short motif at 113-123 is the Conserved undecapeptide motif I element; that stretch reads AIMYSWYFPKD. The Hepta-peptide GHRHDWE motif II signature appears at 130–136; it reads GHRHDWE.

Belongs to the Necrosis inducing protein (NPP1) family.

The protein localises to the secreted. Secreted effector that contributes strongly to virulence during infection by P.capsici. Causes large necrotic areas in both host C.annuum and non-host N.benthamiana. This chain is NLP effector protein 2, found in Phytophthora capsici.